A 592-amino-acid polypeptide reads, in one-letter code: Guanylate-binding protein 1 (592 aa).

A GTPase domain (Globular) region spans residues 1-311; sequence MASEIHMTGP…NAISSGDLPC (311 aa). A GB1/RHD3-type G domain is found at 35–278; that stretch reads TQPMVVVAIV…FCSYIFSNSK (244 aa). Residues 45–52, 67–69, and 97–101 contribute to the GTP site; these read GLYRTGKS, LGS, and DTEGL. Ser-156 bears the Phosphoserine; by PIM1 mark. Residues Lys-207, Lys-209, Lys-210, Lys-382, Lys-562, Lys-567, Lys-573, and Lys-587 each participate in a (Microbial infection) Glycyl lysine isopeptide (Lys-Gly) (interchain with G-Cter in ubiquitin) cross-link. Residue Cys-589 is modified to Cysteine methyl ester. Cys-589 is lipidated: S-farnesyl cysteine. Thr-590 carries the phosphothreonine; by PIM1 modification. The propeptide at 590 to 592 is removed in mature form; that stretch reads TIS.

It belongs to the TRAFAC class dynamin-like GTPase superfamily. GB1/RHD3 GTPase family. GB1 subfamily. In terms of assembly, homodimer; homodimerization occurs upon GTP-binding and is required for the second hydrolysis step from GDP to GMP. Undergoes conformational changes and oligomerization upon GTP-binding and hydrolysis. Heterodimer with other family members, including GBP2, GBP3, GBP4 and GBP5. Dimerization regulates subcellular location to membranous structures. Interacts with SQSTM1. Interacts (when phosphorylated) with 14-3-3 protein sigma (SFN); leading to GBP1 retention in the cytosol and inactivation. In terms of processing, isoprenylation is required for proper subcellular location. Phosphorylated at Ser-156 by PIM1 in absence of infection, inhibits GBP1: phosphorylation promotes interaction with 14-3-3 protein sigma (SFN), leading to GBP1 retention in the cytosol. Dephosphorylated in response to infection, liberating GBP1. Post-translationally, (Microbial infection) Ubiquitinated by S.flexneri IpaH9.8, leading to its degradation by the proteasome, thereby preventing its ability to promote host defense against bacterial infection.

It localises to the cytoplasmic vesicle membrane. The protein localises to the golgi apparatus membrane. Its subcellular location is the cell membrane. It is found in the cytoplasm. The protein resides in the cytosol. It localises to the secreted. The enzyme catalyses GTP + H2O = GDP + phosphate + H(+). It carries out the reaction GDP + H2O = GMP + phosphate + H(+). Its function is as follows. Interferon (IFN)-inducible GTPase that plays important roles in innate immunity against a diverse range of bacterial, viral and protozoan pathogens. Hydrolyzes GTP to GMP in two consecutive cleavage reactions: GTP is first hydrolyzed to GDP and then to GMP in a processive manner. Following infection, recruited to the pathogen-containing vacuoles or vacuole-escaped bacteria and promotes both inflammasome assembly and autophagy. Acts as a positive regulator of inflammasome assembly by facilitating the detection of inflammasome ligands from pathogens. Involved in the lysis of pathogen-containing vacuoles, releasing pathogens into the cytosol. Following pathogen release in the cytosol, forms a protein coat in a GTPase-dependent manner that encapsulates pathogens and promotes the detection of ligands by pattern recognition receptors. Plays a key role in inflammasome assembly in response to infection by Gram-negative bacteria: following pathogen release in the cytosol, forms a protein coat that encapsulates Gram-negative bacteria and directly binds to lipopolysaccharide (LPS), disrupting the O-antigen barrier and unmasking lipid A that is that detected by the non-canonical inflammasome effector CASP4/CASP11. Also promotes recruitment of proteins that mediate bacterial cytolysis, leading to release double-stranded DNA (dsDNA) that activates the AIM2 inflammasome. Involved in autophagy by regulating bacteriolytic peptide generation via its interaction with ubiquitin-binding protein SQSTM1, which delivers monoubiquitinated proteins to autolysosomes for the generation of bacteriolytic peptides. Confers protection to several pathogens, including the bacterial pathogens L.monocytogenes and M.bovis BCG as well as the protozoan pathogen T.gondii. Exhibits antiviral activity against influenza virus. In Homo sapiens (Human), this protein is Guanylate-binding protein 1.